The following is a 458-amino-acid chain: A-type ATP synthase subunit B (458 aa).

The protein belongs to the ATPase alpha/beta chains family. In terms of assembly, has multiple subunits with at least A(3), B(3), C, D, E, F, H, I and proteolipid K(x).

It localises to the cell membrane. In terms of biological role, component of the A-type ATP synthase that produces ATP from ADP in the presence of a proton gradient across the membrane. The B chain is a regulatory subunit. The polypeptide is A-type ATP synthase subunit B (Methanocorpusculum labreanum (strain ATCC 43576 / DSM 4855 / Z)).